A 239-amino-acid chain; its full sequence is Pyridoxine 5'-phosphate synthase (239 aa).

N7 lines the 3-amino-2-oxopropyl phosphate pocket. A 1-deoxy-D-xylulose 5-phosphate-binding site is contributed by 9 to 10; that stretch reads DH. R18 is a 3-amino-2-oxopropyl phosphate binding site. The active-site Proton acceptor is the H43. Residues R45 and H50 each coordinate 1-deoxy-D-xylulose 5-phosphate. E70 functions as the Proton acceptor in the catalytic mechanism. T100 provides a ligand contact to 1-deoxy-D-xylulose 5-phosphate. H191 serves as the catalytic Proton donor. 3-amino-2-oxopropyl phosphate contacts are provided by residues G192 and 213–214; that span reads GH.

Belongs to the PNP synthase family. Homooctamer; tetramer of dimers.

The protein resides in the cytoplasm. The catalysed reaction is 3-amino-2-oxopropyl phosphate + 1-deoxy-D-xylulose 5-phosphate = pyridoxine 5'-phosphate + phosphate + 2 H2O + H(+). It functions in the pathway cofactor biosynthesis; pyridoxine 5'-phosphate biosynthesis; pyridoxine 5'-phosphate from D-erythrose 4-phosphate: step 5/5. In terms of biological role, catalyzes the complicated ring closure reaction between the two acyclic compounds 1-deoxy-D-xylulose-5-phosphate (DXP) and 3-amino-2-oxopropyl phosphate (1-amino-acetone-3-phosphate or AAP) to form pyridoxine 5'-phosphate (PNP) and inorganic phosphate. This is Pyridoxine 5'-phosphate synthase from Desulforapulum autotrophicum (strain ATCC 43914 / DSM 3382 / VKM B-1955 / HRM2) (Desulfobacterium autotrophicum).